The primary structure comprises 141 residues: MRVLAIDWGEKYIGLAISDPLRIIAQGLDVWEIKDEEDFVNRLKKLIKEYNVSEIVLGYPISLRGHENEKTKKIEYVAERIKTVVNLPIKFVDERFTTMEAERVLLEGDIKRRDRKLLKNKQAAVIILQKYLDSLSLDTKI.

The protein belongs to the YqgF nuclease family.

Its subcellular location is the cytoplasm. In terms of biological role, could be a nuclease involved in processing of the 5'-end of pre-16S rRNA. The protein is Putative pre-16S rRNA nuclease of Dictyoglomus turgidum (strain DSM 6724 / Z-1310).